Reading from the N-terminus, the 370-residue chain is tRNA 2-selenouridine synthase (370 aa).

The Rhodanese domain occupies 12–136 (FLDDVPMMDM…MRTFLLETTQ (125 aa)). C95 (S-selanylcysteine intermediate) is an active-site residue.

It belongs to the SelU family. In terms of assembly, monomer.

It catalyses the reaction 5-methylaminomethyl-2-thiouridine(34) in tRNA + selenophosphate + (2E)-geranyl diphosphate + H2O + H(+) = 5-methylaminomethyl-2-selenouridine(34) in tRNA + (2E)-thiogeraniol + phosphate + diphosphate. The enzyme catalyses 5-methylaminomethyl-2-thiouridine(34) in tRNA + (2E)-geranyl diphosphate = 5-methylaminomethyl-S-(2E)-geranyl-thiouridine(34) in tRNA + diphosphate. It carries out the reaction 5-methylaminomethyl-S-(2E)-geranyl-thiouridine(34) in tRNA + selenophosphate + H(+) = 5-methylaminomethyl-2-(Se-phospho)selenouridine(34) in tRNA + (2E)-thiogeraniol. The catalysed reaction is 5-methylaminomethyl-2-(Se-phospho)selenouridine(34) in tRNA + H2O = 5-methylaminomethyl-2-selenouridine(34) in tRNA + phosphate. Its function is as follows. Involved in the post-transcriptional modification of the uridine at the wobble position (U34) of tRNA(Lys), tRNA(Glu) and tRNA(Gln). Catalyzes the conversion of 2-thiouridine (S2U-RNA) to 2-selenouridine (Se2U-RNA). Acts in a two-step process involving geranylation of 2-thiouridine (S2U) to S-geranyl-2-thiouridine (geS2U) and subsequent selenation of the latter derivative to 2-selenouridine (Se2U) in the tRNA chain. This Pseudomonas putida (strain ATCC 700007 / DSM 6899 / JCM 31910 / BCRC 17059 / LMG 24140 / F1) protein is tRNA 2-selenouridine synthase.